Reading from the N-terminus, the 286-residue chain is Shikimate dehydrogenase (NADP(+)) (286 aa).

Residues 22–24 and Thr-71 contribute to the shikimate site; that span reads SRS. Lys-75 functions as the Proton acceptor in the catalytic mechanism. Glu-87 contacts NADP(+). Positions 96 and 111 each coordinate shikimate. Residues 136 to 140, 160 to 165, and Ile-225 contribute to the NADP(+) site; these read GAGGA and NRTAAR. Tyr-227 provides a ligand contact to shikimate. Gly-248 contributes to the NADP(+) binding site.

The protein belongs to the shikimate dehydrogenase family. Homodimer.

It carries out the reaction shikimate + NADP(+) = 3-dehydroshikimate + NADPH + H(+). It participates in metabolic intermediate biosynthesis; chorismate biosynthesis; chorismate from D-erythrose 4-phosphate and phosphoenolpyruvate: step 4/7. In terms of biological role, involved in the biosynthesis of the chorismate, which leads to the biosynthesis of aromatic amino acids. Catalyzes the reversible NADPH linked reduction of 3-dehydroshikimate (DHSA) to yield shikimate (SA). The protein is Shikimate dehydrogenase (NADP(+)) of Sinorhizobium fredii (strain NBRC 101917 / NGR234).